The chain runs to 220 residues: Adenylate kinase (220 aa).

10–15 lines the ATP pocket; that stretch reads GAGKGT. Residues 30 to 59 are NMP; the sequence is STGDMLRAAVKAGTPLGVEAKTYMDEGKLV. Residues Thr-31, Arg-36, 57–59, 85–88, and Gln-92 contribute to the AMP site; these read KLV and GFPR. The segment at 122-159 is LID; the sequence is GRRTHPASGRTYHVKFNPPKVEGKDDVTGEPLVQRDDD. ATP-binding positions include Arg-123 and 132–133; that span reads TY. AMP is bound by residues Arg-156 and Arg-167. Gly-206 is a binding site for ATP.

This sequence belongs to the adenylate kinase family. As to quaternary structure, monomer.

The protein resides in the cytoplasm. The enzyme catalyses AMP + ATP = 2 ADP. It participates in purine metabolism; AMP biosynthesis via salvage pathway; AMP from ADP: step 1/1. Its function is as follows. Catalyzes the reversible transfer of the terminal phosphate group between ATP and AMP. Plays an important role in cellular energy homeostasis and in adenine nucleotide metabolism. The protein is Adenylate kinase of Burkholderia mallei (strain NCTC 10247).